The chain runs to 298 residues: 4-diphosphocytidyl-2-C-methyl-D-erythritol kinase (298 aa).

Lys-15 is an active-site residue. 102–112 (PVAAGIGGGSS) serves as a coordination point for ATP. Residue Asp-142 is part of the active site.

Belongs to the GHMP kinase family. IspE subfamily.

The catalysed reaction is 4-CDP-2-C-methyl-D-erythritol + ATP = 4-CDP-2-C-methyl-D-erythritol 2-phosphate + ADP + H(+). Its pathway is isoprenoid biosynthesis; isopentenyl diphosphate biosynthesis via DXP pathway; isopentenyl diphosphate from 1-deoxy-D-xylulose 5-phosphate: step 3/6. Functionally, catalyzes the phosphorylation of the position 2 hydroxy group of 4-diphosphocytidyl-2C-methyl-D-erythritol. This is 4-diphosphocytidyl-2-C-methyl-D-erythritol kinase from Hyphomonas neptunium (strain ATCC 15444).